The sequence spans 406 residues: MAQTTVTVVATKRDALDPYIKILQNRSNDIDVSFSSYLKPDNNEQQQKENEDTELSIFEARSYFSENGSNDSRCQTRNLSGPRFSSVASAKVSSFTVGQTASSEASWNSQTGLLSNKNRQGSDRDGRRSSKKGPRWFFRRRACPCSSSKSVQVQESKPRIAVPKTGSDRIVSNRIVHSHQTISSPEPIRLTIPSNTVTRSIDYTANKEARAPVSNFSFPTLNETSQLSENPKNPVLNHIKPVRIEPALLPIKPVLNPTSPKGVIIDEEATSDASSDLFEIESFSTQTAARPWAPPVRDSMEETVSEYGYEPSEASVTWSVMTAEPASAVAANFSRIALSSSSTAFSGYDKKRTGLLNCHCEKAVMVNGDKRLVQPVKSVGVQNDVAGKVLCNNGSSKLSVTSRPRQ.

A compositionally biased stretch (polar residues) spans 106–119; that stretch reads SWNSQTGLLSNKNR. A disordered region spans residues 106 to 133; the sequence is SWNSQTGLLSNKNRQGSDRDGRRSSKKG.

Belongs to the PKS family. As to quaternary structure, interacts in vitro with PHYA and PHYB. As to expression, expressed in the hypocotyl elongation zone. Not found in the root elongation zone.

In terms of biological role, modulates phytochrome-mediated control of hypocotyl growth orientation. Involved in PHYA and PHYB signaling. Acts as an inhibitor of asymmetric growth. Not involved in the control of leaf flattening. In Arabidopsis thaliana (Mouse-ear cress), this protein is Protein PHYTOCHROME KINASE SUBSTRATE 4 (PKS4).